We begin with the raw amino-acid sequence, 399 residues long: Elongation factor Tu (399 aa).

Positions 10 to 209 (KPHVNIGTIG…AVDSYIPTPV (200 aa)) constitute a tr-type G domain. Positions 19 to 26 (GHVDHGKT) are G1. Position 19-26 (19-26 (GHVDHGKT)) interacts with GTP. A Mg(2+)-binding site is contributed by Thr26. The interval 60–64 (GITIA) is G2. The segment at 81 to 84 (DCPG) is G3. GTP contacts are provided by residues 81–85 (DCPGH) and 136–139 (NKAD). Residues 136-139 (NKAD) form a G4 region. The interval 174–176 (SAL) is G5.

This sequence belongs to the TRAFAC class translation factor GTPase superfamily. Classic translation factor GTPase family. EF-Tu/EF-1A subfamily. In terms of assembly, monomer.

The protein resides in the cytoplasm. It carries out the reaction GTP + H2O = GDP + phosphate + H(+). Functionally, GTP hydrolase that promotes the GTP-dependent binding of aminoacyl-tRNA to the A-site of ribosomes during protein biosynthesis. The protein is Elongation factor Tu of Campylobacter fetus subsp. fetus (strain 82-40).